The following is a 142-amino-acid chain: Large ribosomal subunit protein mL43 (142 aa).

Belongs to the mitochondrion-specific ribosomal protein mL43 family. In terms of assembly, component of the mitochondrial large ribosomal subunit. Mature mitochondrial ribosomes consist of a small (37S) and a large (54S) subunit. The 37S subunit contains at least 33 different proteins and 1 molecule of RNA (15S). The 54S subunit contains at least 45 different proteins and 1 molecule of RNA (21S).

The protein localises to the mitochondrion. This chain is Large ribosomal subunit protein mL43 (MRPL51), found in Eremothecium gossypii (strain ATCC 10895 / CBS 109.51 / FGSC 9923 / NRRL Y-1056) (Yeast).